Consider the following 176-residue polypeptide: Protein GrpE (176 aa).

Positions 1–31 are disordered; sequence MSEQKQEFENENAENSEHLQDENLQNIEDVE.

Belongs to the GrpE family. Homodimer.

The protein localises to the cytoplasm. Functionally, participates actively in the response to hyperosmotic and heat shock by preventing the aggregation of stress-denatured proteins, in association with DnaK and GrpE. It is the nucleotide exchange factor for DnaK and may function as a thermosensor. Unfolded proteins bind initially to DnaJ; upon interaction with the DnaJ-bound protein, DnaK hydrolyzes its bound ATP, resulting in the formation of a stable complex. GrpE releases ADP from DnaK; ATP binding to DnaK triggers the release of the substrate protein, thus completing the reaction cycle. Several rounds of ATP-dependent interactions between DnaJ, DnaK and GrpE are required for fully efficient folding. This chain is Protein GrpE, found in Campylobacter jejuni subsp. doylei (strain ATCC BAA-1458 / RM4099 / 269.97).